The primary structure comprises 361 residues: Putative dual-specificity RNA methyltransferase RlmN (361 aa).

E91 functions as the Proton acceptor in the catalytic mechanism. Residues Q97 to R329 form the Radical SAM core domain. Positions 111, 115, and 118 each coordinate [4Fe-4S] cluster. Residues G163–E164, S195, S218–H220, and T296 each bind S-adenosyl-L-methionine.

The protein belongs to the radical SAM superfamily. RlmN family. It depends on [4Fe-4S] cluster as a cofactor.

The protein resides in the cytoplasm. It carries out the reaction adenosine(2503) in 23S rRNA + 2 reduced [2Fe-2S]-[ferredoxin] + 2 S-adenosyl-L-methionine = 2-methyladenosine(2503) in 23S rRNA + 5'-deoxyadenosine + L-methionine + 2 oxidized [2Fe-2S]-[ferredoxin] + S-adenosyl-L-homocysteine. The enzyme catalyses adenosine(37) in tRNA + 2 reduced [2Fe-2S]-[ferredoxin] + 2 S-adenosyl-L-methionine = 2-methyladenosine(37) in tRNA + 5'-deoxyadenosine + L-methionine + 2 oxidized [2Fe-2S]-[ferredoxin] + S-adenosyl-L-homocysteine. In terms of biological role, specifically methylates position 2 of adenine 2503 in 23S rRNA and position 2 of adenine 37 in tRNAs. This chain is Putative dual-specificity RNA methyltransferase RlmN, found in Streptococcus pneumoniae (strain CGSP14).